A 323-amino-acid chain; its full sequence is Cyclin-H (323 aa).

S5 is subject to Phosphoserine; by CDK8. A Phosphoserine modification is found at S132. Residues Y297–L323 form a disordered region. The span at Y302–E311 shows a compositional bias: basic and acidic residues. The residue at position 304 (S304) is a Phosphoserine; by CDK8. Positions E312–L323 are enriched in acidic residues. T315 bears the Phosphothreonine mark. S322 is subject to Phosphoserine.

It belongs to the cyclin family. Cyclin C subfamily. In terms of assembly, associates primarily with CDK7 and MAT1 to form the CAK complex. CAK can further associate with the core-TFIIH to form the TFIIH basal transcription factor.

It is found in the nucleus. In terms of biological role, regulates CDK7, the catalytic subunit of the CDK-activating kinase (CAK) enzymatic complex. CAK activates the cyclin-associated kinases CDK1, CDK2, CDK4 and CDK6 by threonine phosphorylation. CAK complexed to the core-TFIIH basal transcription factor activates RNA polymerase II by serine phosphorylation of the repetitive C-terminal domain (CTD) of its large subunit (POLR2A), allowing its escape from the promoter and elongation of the transcripts. Involved in cell cycle control and in RNA transcription by RNA polymerase II. Its expression and activity are constant throughout the cell cycle. The polypeptide is Cyclin-H (CCNH) (Homo sapiens (Human)).